The chain runs to 62 residues: Translational regulator CsrA (62 aa).

Belongs to the CsrA/RsmA family. Homodimer; the beta-strands of each monomer intercalate to form a hydrophobic core, while the alpha-helices form wings that extend away from the core.

The protein resides in the cytoplasm. A key translational regulator that binds mRNA to regulate translation initiation and/or mRNA stability. Mediates global changes in gene expression, shifting from rapid growth to stress survival by linking envelope stress, the stringent response and the catabolite repression systems. Usually binds in the 5'-UTR; binding at or near the Shine-Dalgarno sequence prevents ribosome-binding, repressing translation, binding elsewhere in the 5'-UTR can activate translation and/or stabilize the mRNA. Its function is antagonized by small RNA(s). This chain is Translational regulator CsrA, found in Idiomarina loihiensis (strain ATCC BAA-735 / DSM 15497 / L2-TR).